We begin with the raw amino-acid sequence, 334 residues long: Dihydroorotate dehydrogenase (quinone) (334 aa).

FMN is bound by residues 59 to 63 (AGLDK) and T83. K63 serves as a coordination point for substrate. 108–112 (NRMGF) lines the substrate pocket. FMN-binding residues include N136 and N169. Residue N169 participates in substrate binding. Residue S172 is the Nucleophile of the active site. Residue N174 participates in substrate binding. K214 and T242 together coordinate FMN. Substrate is bound at residue 243–244 (NT). Residues G265, G294, and 315-316 (YS) each bind FMN.

This sequence belongs to the dihydroorotate dehydrogenase family. Type 2 subfamily. In terms of assembly, monomer. FMN is required as a cofactor.

The protein localises to the cell membrane. The catalysed reaction is (S)-dihydroorotate + a quinone = orotate + a quinol. The protein operates within pyrimidine metabolism; UMP biosynthesis via de novo pathway; orotate from (S)-dihydroorotate (quinone route): step 1/1. In terms of biological role, catalyzes the conversion of dihydroorotate to orotate with quinone as electron acceptor. The sequence is that of Dihydroorotate dehydrogenase (quinone) from Acinetobacter baumannii (strain SDF).